Here is a 161-residue protein sequence, read N- to C-terminus: ATP synthase subunit b' (161 aa).

The helical transmembrane segment at valine 30–tyrosine 47 threads the bilayer.

Belongs to the ATPase B chain family. F-type ATPases have 2 components, F(1) - the catalytic core - and F(0) - the membrane proton channel. F(1) has five subunits: alpha(3), beta(3), gamma(1), delta(1), epsilon(1). F(0) has four main subunits: a(1), b(1), b'(1) and c(10-14). The alpha and beta chains form an alternating ring which encloses part of the gamma chain. F(1) is attached to F(0) by a central stalk formed by the gamma and epsilon chains, while a peripheral stalk is formed by the delta, b and b' chains.

Its subcellular location is the cellular thylakoid membrane. In terms of biological role, f(1)F(0) ATP synthase produces ATP from ADP in the presence of a proton or sodium gradient. F-type ATPases consist of two structural domains, F(1) containing the extramembraneous catalytic core and F(0) containing the membrane proton channel, linked together by a central stalk and a peripheral stalk. During catalysis, ATP synthesis in the catalytic domain of F(1) is coupled via a rotary mechanism of the central stalk subunits to proton translocation. Component of the F(0) channel, it forms part of the peripheral stalk, linking F(1) to F(0). The b'-subunit is a diverged and duplicated form of b found in plants and photosynthetic bacteria. This chain is ATP synthase subunit b', found in Picosynechococcus sp. (strain ATCC 27264 / PCC 7002 / PR-6) (Agmenellum quadruplicatum).